We begin with the raw amino-acid sequence, 749 residues long: Patatin-like phospholipase domain-containing protein An01g04180 (749 aa).

Residues 1–21 form a disordered region; sequence MNGAEKSAAGDTYDPSTIPDY. A helical transmembrane segment spans residues 87–107; the sequence is WPFLFTVFGWITALAFAYTLT. Positions 277–468 constitute a PNPLA domain; that stretch reads LCLSGGATFA…RTDIPIKALN (192 aa). The GXSXG signature appears at 308 to 312; sequence GTSGG. Ser310 functions as the Nucleophile in the catalytic mechanism. The active-site Proton acceptor is Asp455. Residues 619–726 form a disordered region; that stretch reads AGGRPISPAP…STGSSIFEEV (108 aa). Residues 649–664 are compositionally biased toward basic and acidic residues; sequence PLNERLDHNLPERRGD. Over residues 685 to 707 the composition is skewed to low complexity; the sequence is SLSENSSNESAARPSSSSSSSRL.

It belongs to the PLPL family.

Its subcellular location is the membrane. Its function is as follows. Probable lipid hydrolase. The sequence is that of Patatin-like phospholipase domain-containing protein An01g04180 from Aspergillus niger (strain ATCC MYA-4892 / CBS 513.88 / FGSC A1513).